Consider the following 495-residue polypeptide: Dipeptide and tripeptide permease B (495 aa).

At 1–16 the chain is on the cytoplasmic side; the sequence is MDNKVSILNQPKPFKM. The chain crosses the membrane as a helical span at residues 17–37; it reads IFFIELWERFGYYGLQGILAV. The Periplasmic segment spans residues 38–50; that stretch reads YFVDKLGFSMQDS. Residues 51-71 form a helical membrane-spanning segment; it reads FVTFGAFAALVYGLVSVGGYV. Topologically, residues 72-80 are cytoplasmic; sequence GDYVLGTKR. A helical membrane pass occupies residues 81 to 101; the sequence is TMVFGAVVLALGYFLMGFSIL. Topologically, residues 102 to 104 are periplasmic; it reads NPN. A helical transmembrane segment spans residues 105-125; sequence FIYVALGAIAVGNGLFKANPS. The Cytoplasmic segment spans residues 126–144; that stretch reads SLLAKCYEKGDSRLDGAFT. Residues 145 to 165 traverse the membrane as a helical segment; it reads LYYMSINIGSLVSLSISPVIA. Over 166–170 the chain is Periplasmic; the sequence is NNYGY. The chain crosses the membrane as a helical span at residues 171-191; that stretch reads EYAFIICGLGLIASLFSYFSL. Residues 192–209 lie on the Cytoplasmic side of the membrane; the sequence is RSTVQGIGSEPDALPLNK. The chain crosses the membrane as a helical span at residues 210-230; that stretch reads TKALIVLIGTIASTLVCAWLL. Gln-231 is a topological domain (periplasmic). The chain crosses the membrane as a helical span at residues 232 to 252; it reads NIMMANLALGLIGVGVVGFFL. At 253–265 the chain is on the cytoplasmic side; sequence KETFKEVGEQRNK. The helical transmembrane segment at 266-286 threads the bilayer; sequence MIVAFILMLQAIIFYVLYAQM. The Periplasmic segment spans residues 287-309; the sequence is PTSLNFFAINNVHSELFGMDINP. The chain crosses the membrane as a helical span at residues 310 to 330; it reads VSLQALNPFWVIFCSPILAYL. Over 331 to 348 the chain is Cytoplasmic; sequence YTYYGNQNKDLSMPGKFT. Residues 349-369 form a helical membrane-spanning segment; that stretch reads VGMFMCAFGFLSVAAAGNWFA. The Periplasmic segment spans residues 370 to 373; the sequence is DQAG. The helical transmembrane segment at 374-394 threads the bilayer; it reads MVSVWWMVLVYLFQSLGELMI. The Cytoplasmic portion of the chain corresponds to 395-409; the sequence is SGLGLAMVASLVPQR. Residues 410 to 430 form a helical membrane-spanning segment; the sequence is LMGFTMGAWFLTQAASFIIGG. Residues 431–454 lie on the Periplasmic side of the membrane; the sequence is YVATFSATPEHLTDPLDTLPVYTE. Residues 455–475 traverse the membrane as a helical segment; the sequence is LFQNIGFVTLAVAIVMAITAP. Over 476–495 the chain is Cytoplasmic; sequence KLNKMMTSSQPEDAELVEQP.

Belongs to the major facilitator superfamily. Proton-dependent oligopeptide transporter (POT/PTR) (TC 2.A.17) family. DtpB subfamily.

Its subcellular location is the cell inner membrane. Proton-dependent permease that transports di- and tripeptides. The sequence is that of Dipeptide and tripeptide permease B from Aliivibrio fischeri (strain MJ11) (Vibrio fischeri).